Reading from the N-terminus, the 335-residue chain is Phosphate acyltransferase (335 aa).

This sequence belongs to the PlsX family. In terms of assembly, homodimer. Probably interacts with PlsY.

The protein localises to the cytoplasm. It carries out the reaction a fatty acyl-[ACP] + phosphate = an acyl phosphate + holo-[ACP]. It functions in the pathway lipid metabolism; phospholipid metabolism. Its function is as follows. Catalyzes the reversible formation of acyl-phosphate (acyl-PO(4)) from acyl-[acyl-carrier-protein] (acyl-ACP). This enzyme utilizes acyl-ACP as fatty acyl donor, but not acyl-CoA. This chain is Phosphate acyltransferase, found in Streptococcus uberis (strain ATCC BAA-854 / 0140J).